Here is a 382-residue protein sequence, read N- to C-terminus: 1-deoxy-D-xylulose 5-phosphate reductoisomerase (382 aa).

NADPH-binding residues include Thr10, Gly11, Ser12, Ile13, Asn38, and Asn120. Residue Lys121 participates in 1-deoxy-D-xylulose 5-phosphate binding. Glu122 contacts NADPH. A Mn(2+)-binding site is contributed by Asp146. 4 residues coordinate 1-deoxy-D-xylulose 5-phosphate: Ser147, Glu148, Ser172, and His195. Glu148 contributes to the Mn(2+) binding site. Gly201 contacts NADPH. The 1-deoxy-D-xylulose 5-phosphate site is built by Ser208, Asn213, Lys214, and Glu217. Glu217 provides a ligand contact to Mn(2+).

This sequence belongs to the DXR family. Mg(2+) serves as cofactor. Requires Mn(2+) as cofactor.

It carries out the reaction 2-C-methyl-D-erythritol 4-phosphate + NADP(+) = 1-deoxy-D-xylulose 5-phosphate + NADPH + H(+). It participates in isoprenoid biosynthesis; isopentenyl diphosphate biosynthesis via DXP pathway; isopentenyl diphosphate from 1-deoxy-D-xylulose 5-phosphate: step 1/6. Its function is as follows. Catalyzes the NADPH-dependent rearrangement and reduction of 1-deoxy-D-xylulose-5-phosphate (DXP) to 2-C-methyl-D-erythritol 4-phosphate (MEP). The protein is 1-deoxy-D-xylulose 5-phosphate reductoisomerase of Thermoanaerobacter sp. (strain X514).